The sequence spans 334 residues: MSEFLTPERTVYDSGVQFLRPKSLDEFIGQENVKKKLSLALEAAKMRGEVLDHVLLAGPPGLGKTTLAHIIASELQTNIHVTSGPVLVKQGDMAAILTSLERGDVLFIDEIHRLNKAVEELLYSAIEDFQIDIMIGKGPSAKSIRIDIQPFTLVGATTRSGLLSSPLRSRFGIILELDFYTVKELKEIIKRAASLMDVEIEDSAAEMIAKRSRGTPRIAIRLTKRVRDMLTVVKADRINTDIVLKTMEVLNIDAEGLDEFDRKILKTIIEIYRGGPVGLNALAASLGVEADTLSEVYEPYLLQAGFLARTPRGRVATEKAYKHLKYEVPENRLF.

A large ATPase domain (RuvB-L) region spans residues 1-180 (MSEFLTPERT…FGIILELDFY (180 aa)). ATP contacts are provided by residues leucine 19, arginine 20, glycine 61, lysine 64, threonine 65, threonine 66, 127–129 (EDF), arginine 170, tyrosine 180, and arginine 217. Threonine 65 is a Mg(2+) binding site. The interval 181-251 (TVKELKEIIK…IVLKTMEVLN (71 aa)) is small ATPAse domain (RuvB-S). The interval 254-334 (AEGLDEFDRK…KYEVPENRLF (81 aa)) is head domain (RuvB-H). DNA-binding residues include arginine 309 and arginine 314.

This sequence belongs to the RuvB family. In terms of assembly, homohexamer. Forms an RuvA(8)-RuvB(12)-Holliday junction (HJ) complex. HJ DNA is sandwiched between 2 RuvA tetramers; dsDNA enters through RuvA and exits via RuvB. An RuvB hexamer assembles on each DNA strand where it exits the tetramer. Each RuvB hexamer is contacted by two RuvA subunits (via domain III) on 2 adjacent RuvB subunits; this complex drives branch migration. In the full resolvosome a probable DNA-RuvA(4)-RuvB(12)-RuvC(2) complex forms which resolves the HJ.

Its subcellular location is the cytoplasm. The enzyme catalyses ATP + H2O = ADP + phosphate + H(+). Its function is as follows. The RuvA-RuvB-RuvC complex processes Holliday junction (HJ) DNA during genetic recombination and DNA repair, while the RuvA-RuvB complex plays an important role in the rescue of blocked DNA replication forks via replication fork reversal (RFR). RuvA specifically binds to HJ cruciform DNA, conferring on it an open structure. The RuvB hexamer acts as an ATP-dependent pump, pulling dsDNA into and through the RuvAB complex. RuvB forms 2 homohexamers on either side of HJ DNA bound by 1 or 2 RuvA tetramers; 4 subunits per hexamer contact DNA at a time. Coordinated motions by a converter formed by DNA-disengaged RuvB subunits stimulates ATP hydrolysis and nucleotide exchange. Immobilization of the converter enables RuvB to convert the ATP-contained energy into a lever motion, pulling 2 nucleotides of DNA out of the RuvA tetramer per ATP hydrolyzed, thus driving DNA branch migration. The RuvB motors rotate together with the DNA substrate, which together with the progressing nucleotide cycle form the mechanistic basis for DNA recombination by continuous HJ branch migration. Branch migration allows RuvC to scan DNA until it finds its consensus sequence, where it cleaves and resolves cruciform DNA. This chain is Holliday junction branch migration complex subunit RuvB, found in Thermotoga petrophila (strain ATCC BAA-488 / DSM 13995 / JCM 10881 / RKU-1).